A 212-amino-acid polypeptide reads, in one-letter code: Pyridoxine/pyridoxamine 5'-phosphate oxidase (212 aa).

Substrate contacts are provided by residues 8–11 (RRNY) and K66. Residues 61–66 (RIVLLK), 76–77 (FT), R82, K83, and Q105 each bind FMN. Positions 123, 127, and 131 each coordinate substrate. Residues 140–141 (QS) and W184 contribute to the FMN site. A substrate-binding site is contributed by 190 to 192 (RLH). An FMN-binding site is contributed by R194.

This sequence belongs to the pyridoxamine 5'-phosphate oxidase family. In terms of assembly, homodimer. FMN serves as cofactor.

The enzyme catalyses pyridoxamine 5'-phosphate + O2 + H2O = pyridoxal 5'-phosphate + H2O2 + NH4(+). It carries out the reaction pyridoxine 5'-phosphate + O2 = pyridoxal 5'-phosphate + H2O2. The protein operates within cofactor metabolism; pyridoxal 5'-phosphate salvage; pyridoxal 5'-phosphate from pyridoxamine 5'-phosphate: step 1/1. It functions in the pathway cofactor metabolism; pyridoxal 5'-phosphate salvage; pyridoxal 5'-phosphate from pyridoxine 5'-phosphate: step 1/1. In terms of biological role, catalyzes the oxidation of either pyridoxine 5'-phosphate (PNP) or pyridoxamine 5'-phosphate (PMP) into pyridoxal 5'-phosphate (PLP). This Cupriavidus metallidurans (strain ATCC 43123 / DSM 2839 / NBRC 102507 / CH34) (Ralstonia metallidurans) protein is Pyridoxine/pyridoxamine 5'-phosphate oxidase.